The primary structure comprises 260 residues: Imidazole glycerol phosphate synthase subunit HisF (260 aa).

Active-site residues include aspartate 11 and aspartate 130.

The protein belongs to the HisA/HisF family. In terms of assembly, heterodimer of HisH and HisF.

Its subcellular location is the cytoplasm. It catalyses the reaction 5-[(5-phospho-1-deoxy-D-ribulos-1-ylimino)methylamino]-1-(5-phospho-beta-D-ribosyl)imidazole-4-carboxamide + L-glutamine = D-erythro-1-(imidazol-4-yl)glycerol 3-phosphate + 5-amino-1-(5-phospho-beta-D-ribosyl)imidazole-4-carboxamide + L-glutamate + H(+). It participates in amino-acid biosynthesis; L-histidine biosynthesis; L-histidine from 5-phospho-alpha-D-ribose 1-diphosphate: step 5/9. Functionally, IGPS catalyzes the conversion of PRFAR and glutamine to IGP, AICAR and glutamate. The HisF subunit catalyzes the cyclization activity that produces IGP and AICAR from PRFAR using the ammonia provided by the HisH subunit. This chain is Imidazole glycerol phosphate synthase subunit HisF, found in Caulobacter sp. (strain K31).